Consider the following 185-residue polypeptide: Ribosome-recycling factor (185 aa).

The protein belongs to the RRF family.

Its subcellular location is the cytoplasm. Responsible for the release of ribosomes from messenger RNA at the termination of protein biosynthesis. May increase the efficiency of translation by recycling ribosomes from one round of translation to another. This is Ribosome-recycling factor from Mycobacterium bovis (strain BCG / Pasteur 1173P2).